A 134-amino-acid chain; its full sequence is 16 kDa beta-galactoside-binding lectin (134 aa).

The residue at position 1 (Met1) is an N-acetylmethionine. The 131-residue stretch at 4-134 folds into the Galectin domain; that stretch reads GLVVTQLDVQ…DFKVKAIKFS (131 aa). Position 69-75 (69-75) interacts with a beta-D-galactoside; that stretch reads WGEEDRK.

Homodimer. Mainly in the liver (adult), mainly in the muscle (embryo).

In terms of biological role, this protein binds beta-galactoside. Its physiological function is not yet known. It may be involved in the regulation of differentiation. The chain is 16 kDa beta-galactoside-binding lectin from Gallus gallus (Chicken).